A 328-amino-acid chain; its full sequence is Endochitinase (328 aa).

Positions 1 to 26 are cleaved as a signal peptide; that stretch reads MRRHKEVNFVAYLLFSLLVLVSAALA. The 42-residue stretch at 27-68 folds into the Chitin-binding type-1 domain; the sequence is QNCGSQGGGKACASGQCCSKFGWCGNTNDYCGSGNCQSQCPG. 7 disulfide bridges follow: Cys-29–Cys-44, Cys-38–Cys-50, Cys-43–Cys-57, Cys-62–Cys-66, Cys-100–Cys-162, Cys-174–Cys-182, and Cys-281–Cys-313. The Proton donor role is filled by Glu-144. Residues 322–328 constitute a propeptide, removed in mature form; sequence ALLVDTL.

The protein belongs to the glycosyl hydrolase 19 family. Chitinase class I subfamily.

It localises to the vacuole. The enzyme catalyses Random endo-hydrolysis of N-acetyl-beta-D-glucosaminide (1-&gt;4)-beta-linkages in chitin and chitodextrins.. Its function is as follows. Defense against chitin-containing fungal pathogens. The polypeptide is Endochitinase (Solanum tuberosum (Potato)).